Consider the following 323-residue polypeptide: 4-hydroxy-3-methylbut-2-enyl diphosphate reductase (323 aa).

Cys21 serves as a coordination point for [4Fe-4S] cluster. (2E)-4-hydroxy-3-methylbut-2-enyl diphosphate contacts are provided by His50 and His83. Residues His50 and His83 each contribute to the dimethylallyl diphosphate site. Isopentenyl diphosphate is bound by residues His50 and His83. Position 105 (Cys105) interacts with [4Fe-4S] cluster. Residue His133 coordinates (2E)-4-hydroxy-3-methylbut-2-enyl diphosphate. His133 contributes to the dimethylallyl diphosphate binding site. His133 contributes to the isopentenyl diphosphate binding site. The active-site Proton donor is Glu135. Thr173 contacts (2E)-4-hydroxy-3-methylbut-2-enyl diphosphate. Position 203 (Cys203) interacts with [4Fe-4S] cluster. The (2E)-4-hydroxy-3-methylbut-2-enyl diphosphate site is built by Ser231, Ser232, Asn233, and Ser276. Ser231, Ser232, Asn233, and Ser276 together coordinate dimethylallyl diphosphate. Ser231, Ser232, Asn233, and Ser276 together coordinate isopentenyl diphosphate.

This sequence belongs to the IspH family. [4Fe-4S] cluster is required as a cofactor.

The catalysed reaction is isopentenyl diphosphate + 2 oxidized [2Fe-2S]-[ferredoxin] + H2O = (2E)-4-hydroxy-3-methylbut-2-enyl diphosphate + 2 reduced [2Fe-2S]-[ferredoxin] + 2 H(+). The enzyme catalyses dimethylallyl diphosphate + 2 oxidized [2Fe-2S]-[ferredoxin] + H2O = (2E)-4-hydroxy-3-methylbut-2-enyl diphosphate + 2 reduced [2Fe-2S]-[ferredoxin] + 2 H(+). Its pathway is isoprenoid biosynthesis; dimethylallyl diphosphate biosynthesis; dimethylallyl diphosphate from (2E)-4-hydroxy-3-methylbutenyl diphosphate: step 1/1. It functions in the pathway isoprenoid biosynthesis; isopentenyl diphosphate biosynthesis via DXP pathway; isopentenyl diphosphate from 1-deoxy-D-xylulose 5-phosphate: step 6/6. Catalyzes the conversion of 1-hydroxy-2-methyl-2-(E)-butenyl 4-diphosphate (HMBPP) into a mixture of isopentenyl diphosphate (IPP) and dimethylallyl diphosphate (DMAPP). Acts in the terminal step of the DOXP/MEP pathway for isoprenoid precursor biosynthesis. This Cutibacterium acnes (strain DSM 16379 / KPA171202) (Propionibacterium acnes) protein is 4-hydroxy-3-methylbut-2-enyl diphosphate reductase.